Here is a 326-residue protein sequence, read N- to C-terminus: MRPLMLQGHERSITQIKYNREGDLLFSCSKDQKPNVWYSLNGERLGTYDGHQGAVWCLDVDWESRKLITGAGDMTAKIWDVEYGTVIASIPTKSSVRTSNFSFSGNQAAYSTDKAMGQSCELFLIDVRNADSSLSEQEPTLRIPMTESKITSMLWGPLDETIITGHDNGNIAIWDIRKGQKVVDSGTDHSAGINDMQLSKDGTMFVTASRDTTAKLFDSESLMCLKTYKTERPVNSAAISPIMDHVVLGGGQDAMEVTTTSTKAGKFDSRFFHLIYEEEFARLKGHFGPINSLAFHPDGKSYASGGEDGFVRVQTFDSTYFENIFE.

5 WD repeats span residues 8–47 (GHERSITQIKYNREGDLLFSCSKDQKPNVWYSLNGERLGT), 50–89 (GHQGAVWCLDVDWESRKLITGAGDMTAKIWDVEYGTVIAS), 145–184 (MTESKITSMLWGPLDETIITGHDNGNIAIWDIRKGQKVVD), 188–227 (DHSAGINDMQLSKDGTMFVTASRDTTAKLFDSESLMCLKT), and 285–326 (GHFG…NIFE).

It belongs to the eIF-3 subunit I family. Component of the eukaryotic translation initiation factor 3 (eIF-3) complex. The eIF-3 complex interacts with pix.

The protein localises to the cytoplasm. Functionally, component of the eukaryotic translation initiation factor 3 (eIF-3) complex, which is involved in protein synthesis of a specialized repertoire of mRNAs and, together with other initiation factors, stimulates binding of mRNA and methionyl-tRNAi to the 40S ribosome. The eIF-3 complex specifically targets and initiates translation of a subset of mRNAs involved in cell proliferation. This chain is Eukaryotic translation initiation factor 3 subunit I, found in Drosophila simulans (Fruit fly).